Here is a 279-residue protein sequence, read N- to C-terminus: Thymidylate synthase (279 aa).

Arg-37 lines the dUMP pocket. His-67 contacts (6R)-5,10-methylene-5,6,7,8-tetrahydrofolate. 142-143 (RR) lines the dUMP pocket. Cys-162 (nucleophile) is an active-site residue. DUMP-binding positions include 182-185 (RSAD), Asn-193, and 223-225 (HLY). A (6R)-5,10-methylene-5,6,7,8-tetrahydrofolate-binding site is contributed by Asp-185. Ser-278 is a binding site for (6R)-5,10-methylene-5,6,7,8-tetrahydrofolate.

Belongs to the thymidylate synthase family. Bacterial-type ThyA subfamily. In terms of assembly, homodimer.

It is found in the cytoplasm. It catalyses the reaction dUMP + (6R)-5,10-methylene-5,6,7,8-tetrahydrofolate = 7,8-dihydrofolate + dTMP. Its pathway is pyrimidine metabolism; dTTP biosynthesis. In terms of biological role, catalyzes the reductive methylation of 2'-deoxyuridine-5'-monophosphate (dUMP) to 2'-deoxythymidine-5'-monophosphate (dTMP) while utilizing 5,10-methylenetetrahydrofolate (mTHF) as the methyl donor and reductant in the reaction, yielding dihydrofolate (DHF) as a by-product. This enzymatic reaction provides an intracellular de novo source of dTMP, an essential precursor for DNA biosynthesis. This Caulobacter vibrioides (strain ATCC 19089 / CIP 103742 / CB 15) (Caulobacter crescentus) protein is Thymidylate synthase.